We begin with the raw amino-acid sequence, 94 residues long: MVYVSNGQVLDSRSRSPWSLSFLTDFFWGAVEFIGLFFQTLVQPDLSKDGNNSASSRFSDGRGPPGFPGRRRMGRINHGAGPTPPPMGGGGUGR.

Residues 20–42 (LSFLTDFFWGAVEFIGLFFQTLV) traverse the membrane as a helical segment. Residues 48-94 (KDGNNSASSRFSDGRGPPGFPGRRRMGRINHGAGPTPPPMGGGGUGR) form a disordered region. A compositionally biased stretch (polar residues) spans 49 to 58 (DGNNSASSRF). Residue Sec92 is a non-standard amino acid, selenocysteine.

This sequence belongs to the selenoprotein K family.

The protein resides in the endoplasmic reticulum membrane. The protein localises to the cell membrane. Its function is as follows. Required for Ca(2+) flux in immune cells and plays a role in T-cell proliferation and in T-cell and neutrophil migration. Involved in endoplasmic reticulum-associated degradation (ERAD) of soluble glycosylated proteins. Required for cell surface expression of CD36 and involved in macrophage uptake of low-density lipoprotein and in foam cell formation. Required for palmitoylation. This chain is Selenoprotein K (selenok), found in Danio rerio (Zebrafish).